The chain runs to 297 residues: Non-homologous end-joining factor 1 (297 aa).

The segment at 1-131 is globular head; it reads MDARLLQLPW…ATVSTVCRHL (131 aa). Residues 220–286 form a C-terminal tail region; sequence PKAPTHPKEE…LTHRPPAGAS (67 aa). The disordered stretch occupies residues 222 to 297; sequence APTHPKEEDT…PKKKAKGLFM (76 aa). Over residues 232-255 the composition is skewed to polar residues; sequence GNSASHRPMAESSSISFEKTVPTQ. The segment covering 263-286 has biased composition (low complexity); that stretch reads VSEPSQVPQSSVSCLTHRPPAGAS. The XLM motif lies at 287–297; it reads KPKKKAKGLFM. A compositionally biased stretch (basic residues) spans 287–297; that stretch reads KPKKKAKGLFM.

The protein belongs to the XRCC4-XLF family. XLF subfamily. Homodimer. Interacts with xrcc4; the interaction is direct and is mediated via a head-to-head interaction between N-terminal head regions. Component of the core long-range non-homologous end joining (NHEJ) complex (also named DNA-PK complex) composed of prkdc/DNA-PKcs, lig4, xrcc4, xrcc6/Ku70, xrcc5/Ku80 and nhej1/xlf.

The protein resides in the nucleus. DNA repair protein involved in DNA non-homologous end joining (NHEJ); required for double-strand break (DSB) repair and V(D)J recombination. It is also involved in telomere maintenance. Plays a key role in NHEJ by promoting the ligation of various mismatched and non-cohesive ends. In some studies, has been shown to associate with xrcc4 to form alternating helical filaments that bridge DNA and act like a bandage, holding together the broken DNA until it is repaired. Alternatively, it has also been shown that rather than forming filaments, a single nhej1 dimer interacts through both head domains with xrcc4 to promote the close alignment of DNA ends. The xrcc4-nhej1/xlf subcomplex binds to the DNA fragments of a DSB in a highly diffusive manner and robustly bridges two independent DNA molecules, holding the broken DNA fragments in close proximity to one other. The mobility of the bridges ensures that the ends remain accessible for further processing by other repair factors. This chain is Non-homologous end-joining factor 1, found in Xenopus laevis (African clawed frog).